The following is a 1708-amino-acid chain: 187-kDa microtubule-associated protein AIR9 (1708 aa).

Positions 67–93 (SSLRVSGTTPVTIRRNSTGGVTENLAG) are enriched in polar residues. The tract at residues 67-255 (SSLRVSGTTP…KTSTPESRDS (189 aa)) is disordered. The segment covering 110–121 (DPVRRSLPELRK) has biased composition (basic and acidic residues). Residues 122 to 134 (SSVSSLSAKTVSK) are compositionally biased toward low complexity. The span at 149–165 (GSRSLTKSTGFSLSKPE) shows a compositional bias: polar residues. The span at 173–234 (SVSVSSKRAP…SIRSKSFSSP (62 aa)) shows a compositional bias: low complexity. LRR repeat units lie at residues 267 to 290 (AGDD…GLHL), 291 to 315 (SPNL…ILNR), 316 to 335 (VKVL…EPLE), 337 to 359 (CKML…LPQL), 360 to 382 (PNLE…SQPR), 384 to 402 (QVLA…FPYL), and 403 to 425 (PVLE…EAAS). A9 repeat units follow at residues 489 to 584 (PSGY…FAIS), 601 to 682 (LNGE…QYKY), 698 to 777 (ITGD…VSTS), 793 to 878 (IVGD…VYVL), 895 to 977 (ITGD…RSCM), 994 to 1073 (VVGA…AISE), 1090 to 1167 (FLGS…RSIR), 1183 to 1272 (IPDC…VVVI), 1287 to 1365 (VRVK…KMSE), 1382 to 1473 (FTGK…AYAE), and 1489 to 1569 (IEGQ…VSAS).

As to quaternary structure, interacts with KCBP. As to expression, strongly expressed in dividing cells, like the meristemic region of the root tip.

The protein resides in the cytoplasm. It is found in the cell cortex. The protein localises to the cytoskeleton. Its subcellular location is the phragmoplast. Functionally, microtubule-associated protein that may be involved in the maturation of cell plates and proper insertion of cross-walls after cytokinesis. The sequence is that of 187-kDa microtubule-associated protein AIR9 from Arabidopsis thaliana (Mouse-ear cress).